Here is a 204-residue protein sequence, read N- to C-terminus: Imidazoleglycerol-phosphate dehydratase (204 aa).

The protein belongs to the imidazoleglycerol-phosphate dehydratase family.

It localises to the cytoplasm. It carries out the reaction D-erythro-1-(imidazol-4-yl)glycerol 3-phosphate = 3-(imidazol-4-yl)-2-oxopropyl phosphate + H2O. It functions in the pathway amino-acid biosynthesis; L-histidine biosynthesis; L-histidine from 5-phospho-alpha-D-ribose 1-diphosphate: step 6/9. This is Imidazoleglycerol-phosphate dehydratase from Corynebacterium urealyticum (strain ATCC 43042 / DSM 7109).